The primary structure comprises 331 residues: Geranylgeranyl pyrophosphate synthase dpmaD (331 aa).

Isopentenyl diphosphate-binding residues include lysine 53, arginine 56, and histidine 85. Aspartate 92 and aspartate 96 together coordinate Mg(2+). A dimethylallyl diphosphate-binding site is contributed by arginine 101. Arginine 102 is an isopentenyl diphosphate binding site. Dimethylallyl diphosphate is bound by residues lysine 179, threonine 180, and glutamine 213. Aspartate 216 provides a ligand contact to Mg(2+). Dimethylallyl diphosphate is bound by residues asparagine 220, lysine 230, and lysine 240.

This sequence belongs to the FPP/GGPP synthase family. Mg(2+) is required as a cofactor.

The catalysed reaction is isopentenyl diphosphate + dimethylallyl diphosphate = (2E)-geranyl diphosphate + diphosphate. It carries out the reaction isopentenyl diphosphate + (2E)-geranyl diphosphate = (2E,6E)-farnesyl diphosphate + diphosphate. It catalyses the reaction isopentenyl diphosphate + (2E,6E)-farnesyl diphosphate = (2E,6E,10E)-geranylgeranyl diphosphate + diphosphate. It functions in the pathway secondary metabolite biosynthesis; terpenoid biosynthesis. In terms of biological role, geranylgeranyl pyrophosphate synthase; part of the gene cluster that mediates the biosynthesis of the diterpenoid pyrones subglutinols A and B. The first step of the pathway is the synthesis of the alpha-pyrone moiety by the polyketide synthase dpmaA via condensation of one acetyl-CoA starter unit with 3 malonyl-CoA units and 2 methylations. The alpha-pyrone is then combined with geranylgeranyl pyrophosphate (GGPP) formed by the GGPP synthase dpmaD through the action of the prenyltransferase dpmaC to yield a linear alpha-pyrone diterpenoid. Subsequent steps in the diterpenoid pyrone biosynthetic pathway involve the decalin core formation, which is initiated by the epoxidation of the C10-C11 olefin by the FAD-dependent oxidoreductase dpmaE, and is followed by a cyclization cascade catalyzed by the terpene cyclase dpmaB. The dehydrogenase dpmaF is then involved in tetrahydrofuran (THF) ring formation at the C5 unit to complete the formation of subglutinols A and B. In Metarhizium anisopliae (Entomophthora anisopliae), this protein is Geranylgeranyl pyrophosphate synthase dpmaD.